A 267-amino-acid polypeptide reads, in one-letter code: Phosphatidylglycerol--prolipoprotein diacylglyceryl transferase (267 aa).

A run of 7 helical transmembrane segments spans residues 17–37, 56–76, 91–111, 120–140, 173–193, 199–219, and 236–256; these read LNIR…WLLA, LVTY…TLFY, IWNG…AIWL, LFEV…AGRL, QLYE…LFSA, MAVS…VEFF, and MGQI…GFAM. R139 is a binding site for a 1,2-diacyl-sn-glycero-3-phospho-(1'-sn-glycerol).

Belongs to the Lgt family.

It localises to the cell inner membrane. It catalyses the reaction L-cysteinyl-[prolipoprotein] + a 1,2-diacyl-sn-glycero-3-phospho-(1'-sn-glycerol) = an S-1,2-diacyl-sn-glyceryl-L-cysteinyl-[prolipoprotein] + sn-glycerol 1-phosphate + H(+). It functions in the pathway protein modification; lipoprotein biosynthesis (diacylglyceryl transfer). In terms of biological role, catalyzes the transfer of the diacylglyceryl group from phosphatidylglycerol to the sulfhydryl group of the N-terminal cysteine of a prolipoprotein, the first step in the formation of mature lipoproteins. In Oleidesulfovibrio alaskensis (strain ATCC BAA-1058 / DSM 17464 / G20) (Desulfovibrio alaskensis), this protein is Phosphatidylglycerol--prolipoprotein diacylglyceryl transferase.